A 632-amino-acid polypeptide reads, in one-letter code: Probable potassium transport system protein Kup 1 (632 aa).

The next 12 helical transmembrane spans lie at 19–39 (LVLGAVGVVFGDIGTSPLYAL), 59–79 (VISMLFWAMIIVVSIKYVVFV), 110–130 (VLMMLGIFGACMFYGDAVITP), 146–166 (PQLSQFVIPITLMILAALFLI), 178–198 (FGPIMTAWFLALGGLGILHLV), 213–233 (ITFLVEHALQAFIVLGSVFLV), 256–276 (WFVLVMPCLMLNYFGQGAMLL), 298–318 (MVLLATCATVIASQAVISGAF), 346–366 (IYLPVINWLLLVLVIGVVISF), 373–393 (AAAYGIAVTTTMVITTILAAV), 403–423 (PALVAVVGLAFIVVDLSFFAA), and 428–448 (VAEGGWFPLLLGSAAFFLLMT).

Belongs to the HAK/KUP transporter (TC 2.A.72) family.

The protein resides in the cell inner membrane. The enzyme catalyses K(+)(in) + H(+)(in) = K(+)(out) + H(+)(out). Functionally, transport of potassium into the cell. Likely operates as a K(+):H(+) symporter. This chain is Probable potassium transport system protein Kup 1, found in Cupriavidus necator (strain ATCC 17699 / DSM 428 / KCTC 22496 / NCIMB 10442 / H16 / Stanier 337) (Ralstonia eutropha).